Here is a 423-residue protein sequence, read N- to C-terminus: Histone deacetylase 14, chloroplastic (423 aa).

A chloroplast-targeting transit peptide spans 1-44; it reads MSMALIVRPFFVPGSAGISGSRNICKKNQWRKYLLKPSGSSINC. The tract at residues 62 to 392 is histone deacetylase; the sequence is DARLIYSVSA…FRALLGEDSL (331 aa). Residue H202 is the Proton donor/acceptor of the active site. Zn(2+) is bound by residues D239, H241, and D326.

The protein belongs to the histone deacetylase family. As to quaternary structure, interacts with PP2A2. Zn(2+) is required as a cofactor. Expressed in stems, leaves, flowers, siliques and mature seeds.

The protein resides in the nucleus. The protein localises to the cytoplasm. It localises to the plastid. Its subcellular location is the chloroplast stroma. It is found in the mitochondrion. It carries out the reaction N-acetylserotonin + H2O = serotonin + acetate. The enzyme catalyses N-acetyltyramine + H2O = tyramine + acetate. The catalysed reaction is N-acetyltryptamine + H2O = tryptamine + acetate. It catalyses the reaction melatonin + H2O = 5-methoxytryptamine + acetate. With respect to regulation, its activity is inhibited by trichostatin A (TSA), a known histone deacetylase inhibitor. Its function is as follows. Regulates lysine acetylation levels of plastid proteins related to photosynthesis. Involved in the regulation of the activation state of RuBisCO, which is controlled by lysine acetylation of RuBisCO activase under low-light conditions. Associates with alpha- and beta-tubulins and deacetylate alpha-tubulin. Does not seem to be required for the cellular patterning in the root epidermis. Involved in the regulation of melatonin biosynthesis by catalyzing the deacetylation of N-acetylserotonin to produce serotonin. N-acetylserotonin is methylated by acetylserotonin O-methyltransferase (ASMT) to produce melatonin (N-acetyl-5-methoxytryptamine). Deacetylates melatonin to produce 5-methoxytryptamine. In vitro, deacetylates N-acetyltyramine and N-acetyltryptamine to produce tyramine and tryptamine, respectively. This Arabidopsis thaliana (Mouse-ear cress) protein is Histone deacetylase 14, chloroplastic.